Reading from the N-terminus, the 154-residue chain is MVKAVAVIRGDSKVSGTVTFEQANENTPTTISWNITGHDANAERGFHVHQFGDNTNGCTSAGPHFNPYGKTHGAPEDDERHVGDLGNFKTDAEGNAVGSKQDKLVKLIGAESVLGRTLVVHAGTDDLGRGGNEESKKTGNAGPRPACGVIGIAA.

Histidine 47, histidine 49, and histidine 64 together coordinate Cu cation. A disulfide bridge connects residues cysteine 58 and cysteine 147. Residues histidine 64, histidine 72, histidine 81, and aspartate 84 each coordinate Zn(2+). Histidine 121 is a Cu cation binding site. A compositionally biased stretch (basic and acidic residues) spans 125 to 137 (DDLGRGGNEESKK). Residues 125–147 (DDLGRGGNEESKKTGNAGPRPAC) form a disordered region. Arginine 144 contacts substrate.

In terms of assembly, homodimer. Requires Cu cation as cofactor. Zn(2+) is required as a cofactor.

The protein resides in the cytoplasm. It catalyses the reaction 2 superoxide + 2 H(+) = H2O2 + O2. In terms of biological role, destroys radicals which are normally produced within the cells and which are toxic to biological systems. The chain is Superoxide dismutase [Cu-Zn] from Aspergillus niger.